A 438-amino-acid chain; its full sequence is MGTIVKNVSIVTGQAEAPFIRHGYFKFADGVIVSVAEGTPSPEEIDRVEVIDGKGKWVMPGMINTHGHLGMSLLRGHSDDLPLQSWLTEKMWPFEGKMDREAVHHARQLAMAEMIKSGTTTFLEMYHLYMDDLAEAVVEQGPRAVLMRSMIGLCSESEQREKLKEAVTFATTWNGDGNGRITTMMAPHAPYTCPPSFIEMIVDEADRIDLPLHTHMAETQREVEEHRKTYGVHPLVHFEQLGFLKDRHWLLAHCVHLGEEELDILEQHPSVHVSHNPMSNLKLGSGIANVQSMLERGINICLGTDSVASNNHLDLVEEMRIAALLQKGAVLDPTAIPAETAIAMATKNGAKALRLPQVGTIEAGKRADFIMIDPQCLHLQPHEHVMSHLVYALKGADVQDVFVEGAPLMLNKELKTFDEEKLQFEANAHYQRICEKLK.

Zn(2+) contacts are provided by His-66 and His-68. Substrate-binding residues include Glu-95, Arg-148, and His-188. His-215 is a binding site for Zn(2+). 2 residues coordinate substrate: Glu-218 and Asp-305. Position 305 (Asp-305) interacts with Zn(2+).

Belongs to the metallo-dependent hydrolases superfamily. MTA/SAH deaminase family. It depends on Zn(2+) as a cofactor.

It carries out the reaction S-adenosyl-L-homocysteine + H2O + H(+) = S-inosyl-L-homocysteine + NH4(+). The catalysed reaction is S-methyl-5'-thioadenosine + H2O + H(+) = S-methyl-5'-thioinosine + NH4(+). Functionally, catalyzes the deamination of 5-methylthioadenosine and S-adenosyl-L-homocysteine into 5-methylthioinosine and S-inosyl-L-homocysteine, respectively. Is also able to deaminate adenosine. The polypeptide is 5-methylthioadenosine/S-adenosylhomocysteine deaminase (Halalkalibacterium halodurans (strain ATCC BAA-125 / DSM 18197 / FERM 7344 / JCM 9153 / C-125) (Bacillus halodurans)).